A 42-amino-acid polypeptide reads, in one-letter code: Photosystem II reaction center protein J (42 aa).

The chain crosses the membrane as a helical span at residues 10 to 30; that stretch reads IPLWLVGTVAGTAAIGLLGIF.

The protein belongs to the PsbJ family. In terms of assembly, PSII is composed of 1 copy each of membrane proteins PsbA, PsbB, PsbC, PsbD, PsbE, PsbF, PsbH, PsbI, PsbJ, PsbK, PsbL, PsbM, PsbT, PsbX, PsbY, PsbZ, Psb30/Ycf12, at least 3 peripheral proteins of the oxygen-evolving complex and a large number of cofactors. It forms dimeric complexes.

Its subcellular location is the plastid. The protein localises to the chloroplast thylakoid membrane. One of the components of the core complex of photosystem II (PSII). PSII is a light-driven water:plastoquinone oxidoreductase that uses light energy to abstract electrons from H(2)O, generating O(2) and a proton gradient subsequently used for ATP formation. It consists of a core antenna complex that captures photons, and an electron transfer chain that converts photonic excitation into a charge separation. The sequence is that of Photosystem II reaction center protein J from Pleurastrum terricola (Filamentous green alga).